The following is a 295-amino-acid chain: UDP-N-acetylenolpyruvoylglucosamine reductase (295 aa).

Residues 23 to 188 (KVGGPADFLA…ISAKFALKPG (166 aa)) form the FAD-binding PCMH-type domain. Arg-167 is a catalytic residue. Ser-217 (proton donor) is an active-site residue. Glu-287 is an active-site residue.

This sequence belongs to the MurB family. Requires FAD as cofactor.

The protein localises to the cytoplasm. It catalyses the reaction UDP-N-acetyl-alpha-D-muramate + NADP(+) = UDP-N-acetyl-3-O-(1-carboxyvinyl)-alpha-D-glucosamine + NADPH + H(+). It functions in the pathway cell wall biogenesis; peptidoglycan biosynthesis. Functionally, cell wall formation. In Streptococcus pyogenes serotype M49 (strain NZ131), this protein is UDP-N-acetylenolpyruvoylglucosamine reductase.